A 312-amino-acid polypeptide reads, in one-letter code: Olfactory receptor 10C1 (312 aa).

At 1–24 (MSANTSMVTEFLLLGFSHLADLQG) the chain is on the extracellular side. An N-linked (GlcNAc...) asparagine glycan is attached at N4. The chain crosses the membrane as a helical span at residues 25–45 (LLFSVFLTIYLLTVAGNFLIV). Residues 46 to 53 (VLVSTDAA) lie on the Cytoplasmic side of the membrane. Residues 54-74 (LQSPMYFFLRTLSALEIGYTS) traverse the membrane as a helical segment. Residues 75-98 (VTVPLLLHHLLTGRRHISRSGCAL) lie on the Extracellular side of the membrane. C96 and C188 are joined by a disulfide. The chain crosses the membrane as a helical span at residues 99-119 (QMFFFLFFGATECCLLAAMAY). Residues 120–138 (DRYAAICEPLRYPLLLSHR) lie on the Cytoplasmic side of the membrane. A helical membrane pass occupies residues 139–159 (VCLQLAGSAWACGVLVGLGHT). Over 160–196 (PFIFSLPFCGPNTIPQFFCEIQPVLQLVCGDTSLNEL) the chain is Extracellular. The chain crosses the membrane as a helical span at residues 197–216 (QIILATALLILCPFGLILGS). At 217–236 (YGRILVTIFRIPSVAGRRKA) the chain is on the cytoplasmic side. Residues 237 to 257 (FSTCSSHLIMVSLFYGTALFI) traverse the membrane as a helical segment. The Extracellular segment spans residues 258–270 (YIRPKASYDPATD). The chain crosses the membrane as a helical span at residues 271-291 (PLVSLFYAVVTPILNPIIYSL). The Cytoplasmic segment spans residues 292-312 (RNTEVKAALKRTIQKTVPMEI).

This sequence belongs to the G-protein coupled receptor 1 family.

It localises to the cell membrane. Functionally, odorant receptor. This Homo sapiens (Human) protein is Olfactory receptor 10C1 (OR10C1).